The sequence spans 437 residues: Trigger factor (437 aa).

Residues 163–248 (GDIAVINFEG…LNQIKAKVLP (86 aa)) enclose the PPIase FKBP-type domain.

Belongs to the FKBP-type PPIase family. Tig subfamily.

The protein localises to the cytoplasm. The enzyme catalyses [protein]-peptidylproline (omega=180) = [protein]-peptidylproline (omega=0). Functionally, involved in protein export. Acts as a chaperone by maintaining the newly synthesized protein in an open conformation. Functions as a peptidyl-prolyl cis-trans isomerase. The protein is Trigger factor of Bdellovibrio bacteriovorus (strain ATCC 15356 / DSM 50701 / NCIMB 9529 / HD100).